We begin with the raw amino-acid sequence, 356 residues long: Branched-chain-amino-acid aminotransferase 6 (356 aa).

Position 199 is an N6-(pyridoxal phosphate)lysine (Lys199).

This sequence belongs to the class-IV pyridoxal-phosphate-dependent aminotransferase family. It depends on pyridoxal 5'-phosphate as a cofactor.

Its subcellular location is the cytoplasm. It carries out the reaction L-leucine + 2-oxoglutarate = 4-methyl-2-oxopentanoate + L-glutamate. The enzyme catalyses L-isoleucine + 2-oxoglutarate = (S)-3-methyl-2-oxopentanoate + L-glutamate. The catalysed reaction is L-valine + 2-oxoglutarate = 3-methyl-2-oxobutanoate + L-glutamate. The protein operates within amino-acid biosynthesis; L-isoleucine biosynthesis; L-isoleucine from 2-oxobutanoate: step 4/4. It participates in amino-acid biosynthesis; L-leucine biosynthesis; L-leucine from 3-methyl-2-oxobutanoate: step 4/4. It functions in the pathway amino-acid biosynthesis; L-valine biosynthesis; L-valine from pyruvate: step 4/4. Converts 2-oxo acids to branched-chain amino acids. Acts on leucine, isoleucine and valine. The protein is Branched-chain-amino-acid aminotransferase 6 (BCAT6) of Arabidopsis thaliana (Mouse-ear cress).